We begin with the raw amino-acid sequence, 1230 residues long: Myosin-1 (1230 aa).

The segment at 1 to 32 (MGISRRPKADKNASAADSAPGGKPNIQKAQFD) is disordered. Residues 39–713 (VGVSDLTLIS…TLFALEHMRD (675 aa)) form the Myosin motor domain. 132 to 139 (GESGAGKT) contributes to the ATP binding site. The tract at residues 403–485 (SIGILDIYGF…PGVFSAMKDA (83 aa)) is actin-binding. IQ domains lie at 717 to 737 (HNMA…RIEA) and 738 to 763 (ATRI…KGHQ). In terms of domain architecture, TH1 spans 771–961 (RRRYSLLGSR…TIHTQAGEPP (191 aa)). 3 disordered regions span residues 945 to 1018 (QDHY…AARP), 1033 to 1065 (TRNT…PVSK), and 1116 to 1230 (AYLE…EDDW). A compositionally biased stretch (polar residues) spans 1033–1045 (TRNTSVQSTQSTR). Pro residues-rich tracts occupy residues 1047–1062 (VPPP…PPAP) and 1122–1142 (TPPP…PGPP). The SH3 domain maps to 1064–1123 (SKEPQYRVLYEFAGQSANEFSLKQGEIVTVLQKETNGWWLTKNVRGQGWAPTAYLEEVTP). The segment covering 1179–1214 (RDSGMSISSNGSGNNSGRSTPTPSLAGGLAEALRAR) has biased composition (low complexity).

It belongs to the TRAFAC class myosin-kinesin ATPase superfamily. Myosin family.

The protein localises to the cytoplasm. It is found in the cytoskeleton. Its subcellular location is the actin patch. Type-I myosin implicated in the organization of the actin cytoskeleton. Required for proper actin cytoskeleton polarization. At the cell cortex, assembles in patch-like structures together with proteins from the actin-polymerizing machinery and promotes actin assembly. Functions as actin nucleation-promoting factor (NPF) for the Arp2/3 complex. The chain is Myosin-1 (myoA) from Sclerotinia sclerotiorum (strain ATCC 18683 / 1980 / Ss-1) (White mold).